Consider the following 274-residue polypeptide: Large ribosomal subunit protein uL2cz/uL2cy (274 aa).

Disordered regions lie at residues 1–21 (MAIHLYKTSTPSTRNGAVDSQ) and 225–274 (PVDH…RRSK).

This sequence belongs to the universal ribosomal protein uL2 family. As to quaternary structure, part of the 50S ribosomal subunit.

It is found in the plastid. The protein resides in the chloroplast. This is Large ribosomal subunit protein uL2cz/uL2cy (rpl2-A) from Arabidopsis thaliana (Mouse-ear cress).